A 262-amino-acid chain; its full sequence is Acyl-[acyl-carrier-protein]--UDP-N-acetylglucosamine O-acyltransferase (262 aa).

The protein belongs to the transferase hexapeptide repeat family. LpxA subfamily. In terms of assembly, homotrimer.

It is found in the cytoplasm. The enzyme catalyses a (3R)-hydroxyacyl-[ACP] + UDP-N-acetyl-alpha-D-glucosamine = a UDP-3-O-[(3R)-3-hydroxyacyl]-N-acetyl-alpha-D-glucosamine + holo-[ACP]. It functions in the pathway glycolipid biosynthesis; lipid IV(A) biosynthesis; lipid IV(A) from (3R)-3-hydroxytetradecanoyl-[acyl-carrier-protein] and UDP-N-acetyl-alpha-D-glucosamine: step 1/6. Involved in the biosynthesis of lipid A, a phosphorylated glycolipid that anchors the lipopolysaccharide to the outer membrane of the cell. In Photorhabdus laumondii subsp. laumondii (strain DSM 15139 / CIP 105565 / TT01) (Photorhabdus luminescens subsp. laumondii), this protein is Acyl-[acyl-carrier-protein]--UDP-N-acetylglucosamine O-acyltransferase.